A 471-amino-acid chain; its full sequence is 3-isopropylmalate dehydratase large subunit (471 aa).

Residues Cys349, Cys409, and Cys412 each contribute to the [4Fe-4S] cluster site.

This sequence belongs to the aconitase/IPM isomerase family. LeuC type 1 subfamily. Heterodimer of LeuC and LeuD. [4Fe-4S] cluster is required as a cofactor.

It catalyses the reaction (2R,3S)-3-isopropylmalate = (2S)-2-isopropylmalate. The protein operates within amino-acid biosynthesis; L-leucine biosynthesis; L-leucine from 3-methyl-2-oxobutanoate: step 2/4. In terms of biological role, catalyzes the isomerization between 2-isopropylmalate and 3-isopropylmalate, via the formation of 2-isopropylmaleate. In Aliivibrio fischeri (strain ATCC 700601 / ES114) (Vibrio fischeri), this protein is 3-isopropylmalate dehydratase large subunit.